The following is a 757-amino-acid chain: Polyribonucleotide nucleotidyltransferase (757 aa).

Mg(2+) contacts are provided by Asp489 and Asp495. Residues 556 to 615 enclose the KH domain; that stretch reads PKILCYKIDKDVVHKVIGSGGKTIRGISSDTSAKIDIDQNNYVYIMADTEEALMEAKTRV. The 69-residue stretch at 632–700 folds into the S1 motif domain; that stretch reads GELYDGKIVS…SDGKIKLTMR (69 aa). A disordered region spans residues 702–757; sequence DEDRVGSGGSSSSPKKRFGAHPRKNGKDNRSNNSERGFNERSGSAEGSSISRKRFF. Basic residues predominate over residues 715–725; the sequence is PKKRFGAHPRK. Residues 732 to 751 show a composition bias toward polar residues; that stretch reads SNNSERGFNERSGSAEGSSI.

The protein belongs to the polyribonucleotide nucleotidyltransferase family. Requires Mg(2+) as cofactor.

The protein localises to the cytoplasm. The enzyme catalyses RNA(n+1) + phosphate = RNA(n) + a ribonucleoside 5'-diphosphate. Its function is as follows. Involved in mRNA degradation. Catalyzes the phosphorolysis of single-stranded polyribonucleotides processively in the 3'- to 5'-direction. In Neorickettsia sennetsu (strain ATCC VR-367 / Miyayama) (Ehrlichia sennetsu), this protein is Polyribonucleotide nucleotidyltransferase.